Here is a 421-residue protein sequence, read N- to C-terminus: Probable G-protein coupled receptor 151 (421 aa).

Topologically, residues 1-44 (MGKATLAVFADSDSSNMNESFAHLHFAGGYLPSDSKGWRTIIPS) are extracellular. Residue asparagine 18 is glycosylated (N-linked (GlcNAc...) asparagine). Residues 45–65 (LLAAVCLVGFVGNLCVIGLLL) form a helical membrane-spanning segment. Topologically, residues 66–74 (HGVWKRKPS) are cytoplasmic. A helical membrane pass occupies residues 75-95 (MIHSLILNLSLADISLLLFSA). The Extracellular segment spans residues 96-122 (PVRATAYVKGVWDLGWFVCKSSDWFTH). Residues cysteine 114 and cysteine 190 are joined by a disulfide bond. The helical transmembrane segment at 123 to 143 (MCMAAKSLTFVVVAKVCFMYA) threads the bilayer. Over 144-156 (SDPAKPVGTHNCT) the chain is Cytoplasmic. Residues 157–177 (IWSLLGAIWVVASLLPLPEWF) traverse the membrane as a helical segment. The Extracellular segment spans residues 178 to 204 (FSTTRHHAGVEMCLVDVPAVAAEFMSL). The helical transmembrane segment at 205-225 (FGKLYPLLVFCLPLLLAGFYF) threads the bilayer. At 226-258 (WRAYNQCKIRCAKTQNLRNQMRSKQLTVMLLST) the chain is on the cytoplasmic side. A helical membrane pass occupies residues 259–279 (AVTSALLWLPEWIAWLWVWHL). Over 280 to 289 (KAGGPMPPQG) the chain is Extracellular. Residues 290 to 310 (FIALSQVLMFSISTVNPLIFL) traverse the membrane as a helical segment. Topologically, residues 311 to 421 (MMSEEFKAGL…HEGQETKGCN (111 aa)) are cytoplasmic. 2 disordered regions span residues 346–381 (IETL…TDKV) and 394–421 (HERD…KGCN). Basic and acidic residues-rich tracts occupy residues 364–379 (DTDR…ETTD) and 409–421 (PWEH…KGCN).

The protein belongs to the G-protein coupled receptor 1 family. In terms of tissue distribution, exclusively expressed in neurons of the habenular complex. The expression is particularly prominent in the medial habenular nucleus, whereas the lateral habenular nucleus exhibited a lower level of expression.

It localises to the cell membrane. Its function is as follows. Orphan receptor. The chain is Probable G-protein coupled receptor 151 (Gpr151) from Rattus norvegicus (Rat).